The chain runs to 429 residues: Glutamate-1-semialdehyde 2,1-aminomutase 1 (429 aa).

The residue at position 268 (K268) is an N6-(pyridoxal phosphate)lysine.

It belongs to the class-III pyridoxal-phosphate-dependent aminotransferase family. HemL subfamily. In terms of assembly, homodimer. Pyridoxal 5'-phosphate is required as a cofactor.

It localises to the cytoplasm. The enzyme catalyses (S)-4-amino-5-oxopentanoate = 5-aminolevulinate. The protein operates within porphyrin-containing compound metabolism; protoporphyrin-IX biosynthesis; 5-aminolevulinate from L-glutamyl-tRNA(Glu): step 2/2. The chain is Glutamate-1-semialdehyde 2,1-aminomutase 1 from Listeria monocytogenes serotype 4b (strain F2365).